The chain runs to 125 residues: Mating factor alpha (125 aa).

The signal sequence occupies residues 1–22 (MKLFTTLSASLIFIHSLGSTRA). N-linked (GlcNAc...) asparagine glycosylation is found at asparagine 57 and asparagine 67.

The polypeptide is Mating factor alpha (Lachancea kluyveri (Yeast)).